A 167-amino-acid polypeptide reads, in one-letter code: Xanthine-guanine phosphoribosyltransferase (167 aa).

5-phospho-alpha-D-ribose 1-diphosphate-binding positions include 47–48 (RG), glutamine 79, and 102–110 (DDLVDSGKT). Glutamine 79 contributes to the GMP binding site. Aspartate 103 lines the Mg(2+) pocket. 2 residues coordinate guanine: aspartate 106 and isoleucine 149. The xanthine site is built by aspartate 106 and isoleucine 149. Residues 106-110 (DSGKT) and 148-149 (WI) each bind GMP.

The protein belongs to the purine/pyrimidine phosphoribosyltransferase family. XGPT subfamily. In terms of assembly, homotetramer. Requires Mg(2+) as cofactor.

It is found in the cell inner membrane. The catalysed reaction is GMP + diphosphate = guanine + 5-phospho-alpha-D-ribose 1-diphosphate. It catalyses the reaction XMP + diphosphate = xanthine + 5-phospho-alpha-D-ribose 1-diphosphate. It carries out the reaction IMP + diphosphate = hypoxanthine + 5-phospho-alpha-D-ribose 1-diphosphate. Its pathway is purine metabolism; GMP biosynthesis via salvage pathway; GMP from guanine: step 1/1. It participates in purine metabolism; XMP biosynthesis via salvage pathway; XMP from xanthine: step 1/1. Its function is as follows. Purine salvage pathway enzyme that catalyzes the transfer of the ribosyl-5-phosphate group from 5-phospho-alpha-D-ribose 1-diphosphate (PRPP) to the N9 position of the 6-oxopurines guanine and xanthine to form the corresponding ribonucleotides GMP (guanosine 5'-monophosphate) and XMP (xanthosine 5'-monophosphate), with the release of PPi. To a lesser extent, also acts on hypoxanthine. The sequence is that of Xanthine-guanine phosphoribosyltransferase from Cereibacter sphaeroides (strain ATCC 17029 / ATH 2.4.9) (Rhodobacter sphaeroides).